Consider the following 289-residue polypeptide: RING-H2 finger protein ATL30 (289 aa).

The helical transmembrane segment at 26 to 46 (VIILTVILLVVFFIGFFAIYF) threads the bilayer. The segment at 114–157 (CAICLLEFEEEHILLRLLTTCYHVFHQECIDQWLESNKTCPVCR) adopts an RING-type; atypical zinc-finger fold. A disordered region spans residues 181-206 (HENRDQEQTSTSNEVMLSRQSSGNNE). The segment covering 188 to 204 (QTSTSNEVMLSRQSSGN) has biased composition (polar residues).

Belongs to the RING-type zinc finger family. ATL subfamily.

It localises to the membrane. It carries out the reaction S-ubiquitinyl-[E2 ubiquitin-conjugating enzyme]-L-cysteine + [acceptor protein]-L-lysine = [E2 ubiquitin-conjugating enzyme]-L-cysteine + N(6)-ubiquitinyl-[acceptor protein]-L-lysine.. It participates in protein modification; protein ubiquitination. In Arabidopsis thaliana (Mouse-ear cress), this protein is RING-H2 finger protein ATL30 (ATL30).